The primary structure comprises 102 residues: Major basic nuclear protein 2 (102 aa).

The span at 1 to 11 (MKAMKATKKAM) shows a compositional bias: basic residues. The segment at 1–43 (MKAMKATKKAMTKTGLAEALAPKPSSARRIAPPSSRAWPPSAQ) is disordered. A compositionally biased stretch (low complexity) spans 21–42 (APKPSSARRIAPPSSRAWPPSA).

The protein resides in the nucleus. This Crypthecodinium cohnii (Dinoflagellate) protein is Major basic nuclear protein 2 (HCc2).